A 173-amino-acid chain; its full sequence is Cytochrome c-type biogenesis protein CcmE (173 aa).

Topologically, residues 1-8 are cytoplasmic; the sequence is MNPRRKSR. Residues 9 to 29 form a helical; Signal-anchor for type II membrane protein membrane-spanning segment; sequence FKLVIFVVLGIAIASGLMLYA. Residues 30 to 173 lie on the Periplasmic side of the membrane; sequence LRQNIDLFYT…RDRQEKEGAK (144 aa). Positions 131 and 135 each coordinate heme. The segment at 152 to 173 is disordered; it reads GIKAADLKGESARDRQEKEGAK. Residues 156–173 show a composition bias toward basic and acidic residues; that stretch reads ADLKGESARDRQEKEGAK.

This sequence belongs to the CcmE/CycJ family.

It is found in the cell inner membrane. Heme chaperone required for the biogenesis of c-type cytochromes. Transiently binds heme delivered by CcmC and transfers the heme to apo-cytochromes in a process facilitated by CcmF and CcmH. This chain is Cytochrome c-type biogenesis protein CcmE, found in Haemophilus influenzae (strain PittEE).